Here is a 375-residue protein sequence, read N- to C-terminus: MFSIDLIQQIKEWKRGSTLPICLGCDVGGSGLRVRLSDFHDSAKYVDLGHAKAQKTAELLKVLEDLQQKILQVEPTTVCLGAAIAVAGPIKNNTVILTNWKGPAEERTLSITQLPKGLFPKDRSYFLNDLEAGAYGVIAAYEQSILEENFVQLFTDRAPTGPILAKGRTAVLAMGSGLGAALVTRTPLLKNPLVLPTELGHLQIAPNMATHKYFQDEQELIQHISDHYYGGKLDPEYEDICSGRGLQLAFQFYHKKLTGEVLPLEQIDAGDVAKKAIAGEKDAYNALRAHYIFYLRAAKAIATSLSCESCVLSLDNQVKNHPFVMKIAKELEEEFYEFIRPDWMTSVRVYSQKSILNFNILGTDYMAHAIANKPQ.

Residue 25–30 coordinates ATP; it reads CDVGGS.

This sequence belongs to the bacterial glucokinase family. As to quaternary structure, monomer. The N-terminus is blocked.

The catalysed reaction is D-glucose + ATP = D-glucose 6-phosphate + ADP + H(+). This chain is Glucokinase 1 (GK1), found in Trichomonas vaginalis.